The sequence spans 324 residues: Serpentine receptor class delta-30 (324 aa).

Transmembrane regions (helical) follow at residues 5–25, 38–58, 83–103, 124–144, 176–196, 227–247, and 258–278; these read IIHS…MYLA, AIIT…FFVM, ACYV…IWMI, VFVA…WFSF, ITLI…YIWI, FQVF…SMFT, and AISV…ILFV. A disordered region spans residues 290-324; it reads KQPKPHPEMCGPIRSNTRTTSISVTNNSSHLSSAH. A compositionally biased stretch (polar residues) spans 303 to 324; sequence RSNTRTTSISVTNNSSHLSSAH.

This sequence belongs to the nematode receptor-like protein srd family.

The protein resides in the membrane. The chain is Serpentine receptor class delta-30 (srd-30) from Caenorhabditis elegans.